Reading from the N-terminus, the 316-residue chain is Aspartate carbamoyltransferase catalytic subunit (316 aa).

The carbamoyl phosphate site is built by R66 and T67. An L-aspartate-binding site is contributed by K94. R116, H146, and Q149 together coordinate carbamoyl phosphate. L-aspartate is bound by residues R179 and R234. Carbamoyl phosphate is bound by residues G275 and P276.

It belongs to the aspartate/ornithine carbamoyltransferase superfamily. ATCase family. Heterododecamer (2C3:3R2) of six catalytic PyrB chains organized as two trimers (C3), and six regulatory PyrI chains organized as three dimers (R2).

It catalyses the reaction carbamoyl phosphate + L-aspartate = N-carbamoyl-L-aspartate + phosphate + H(+). The protein operates within pyrimidine metabolism; UMP biosynthesis via de novo pathway; (S)-dihydroorotate from bicarbonate: step 2/3. Functionally, catalyzes the condensation of carbamoyl phosphate and aspartate to form carbamoyl aspartate and inorganic phosphate, the committed step in the de novo pyrimidine nucleotide biosynthesis pathway. The chain is Aspartate carbamoyltransferase catalytic subunit from Nitrosomonas eutropha (strain DSM 101675 / C91 / Nm57).